Here is an 875-residue protein sequence, read N- to C-terminus: Protein HIR2 (875 aa).

6 WD repeats span residues 10–47 (IHNE…DTAF), 118–158 (KSPS…KLSE), 163–201 (KASK…THKL), 237–277 (PNNA…PAFY), 278–316 (EKPN…PLFN), and 320–359 (VSST…LGVA). Residues 398 to 473 (ESASAAPIPN…IAPGSKKQKK (76 aa)) are disordered. Polar residues predominate over residues 424–446 (ANNQTNGIKTIQSTSMEFNTPSY). WD repeat units lie at residues 546–587 (LFQD…LMAP) and 589–626 (VLGV…LAFP). Residue serine 713 is modified to Phosphoserine.

This sequence belongs to the WD repeat HIR1 family. Component of the HIR complex, composed of HIR1, HIR2, HIR3 and HPC2. This complex may consist of one copy of HIR1 and HIR3 and two copies of HIR2 and HPC2. The HIR complex interacts with ASF1. Interacts with SNF2. Interacts with SNF5. Interacts with SWI3. Interacts with RTT106.

It localises to the nucleus. It is found in the chromosome. Functionally, component of the HIR complex, which cooperates with ASF1 to promote replication-independent chromatin assembly. The HIR complex is also required for the periodic repression of three of the four histone gene loci during the cell cycle as well as for autogenous regulation of the HTA1-HTB1 locus by H2A and H2B. DNA-binding by the HIR complex may repress transcription by inhibiting nucleosome remodeling by the SWI/SNF complex. The HIR complex may also be required for transcriptional silencing of centromeric, telomeric and mating-type loci in the absence of CAF-1. The sequence is that of Protein HIR2 (HIR2) from Saccharomyces cerevisiae (strain ATCC 204508 / S288c) (Baker's yeast).